Consider the following 240-residue polypeptide: MATLFIADLHLQTEEPAITAGFLRFLQGEARQADALYILGDLFEAWIGDDDPNPLHQQIASAIKAVVDAGVPCYFIHGNRDFLVGQRFARQSGMILLAEEERLDLYGREVLIMHGDTLCTDDQGYLAFRAKVHTPWIQRLFLALPLFIRHRIAARMRADSKAANSSKSMEIMDVNPQAVVDAMERHHVQWLIHGHTHRPAVHELQANGQPAWRVVLGAWHSEGSMVKVTPDDVELIHFPF.

Mn(2+) is bound by residues aspartate 8, histidine 10, aspartate 41, asparagine 79, and histidine 114. 79–80 lines the substrate pocket; it reads NR. Aspartate 122, serine 160, asparagine 164, lysine 167, and histidine 195 together coordinate substrate. Mn(2+) is bound by residues histidine 195 and histidine 197.

It belongs to the LpxH family. The cofactor is Mn(2+).

It localises to the cell inner membrane. The enzyme catalyses UDP-2-N,3-O-bis[(3R)-3-hydroxytetradecanoyl]-alpha-D-glucosamine + H2O = 2-N,3-O-bis[(3R)-3-hydroxytetradecanoyl]-alpha-D-glucosaminyl 1-phosphate + UMP + 2 H(+). The protein operates within glycolipid biosynthesis; lipid IV(A) biosynthesis; lipid IV(A) from (3R)-3-hydroxytetradecanoyl-[acyl-carrier-protein] and UDP-N-acetyl-alpha-D-glucosamine: step 4/6. Functionally, hydrolyzes the pyrophosphate bond of UDP-2,3-diacylglucosamine to yield 2,3-diacylglucosamine 1-phosphate (lipid X) and UMP by catalyzing the attack of water at the alpha-P atom. Involved in the biosynthesis of lipid A, a phosphorylated glycolipid that anchors the lipopolysaccharide to the outer membrane of the cell. The sequence is that of UDP-2,3-diacylglucosamine hydrolase from Klebsiella pneumoniae subsp. pneumoniae (strain ATCC 700721 / MGH 78578).